Reading from the N-terminus, the 177-residue chain is Large ribosomal subunit protein uL6 (177 aa).

The protein belongs to the universal ribosomal protein uL6 family. Part of the 50S ribosomal subunit.

In terms of biological role, this protein binds to the 23S rRNA, and is important in its secondary structure. It is located near the subunit interface in the base of the L7/L12 stalk, and near the tRNA binding site of the peptidyltransferase center. The sequence is that of Large ribosomal subunit protein uL6 from Allorhizobium ampelinum (strain ATCC BAA-846 / DSM 112012 / S4) (Agrobacterium vitis (strain S4)).